Here is a 794-residue protein sequence, read N- to C-terminus: MAGWIQAQQLQGDALRQMQVLYGQHFPIEVRHYLAQWIESQPWDAIDLDNPQDRAQVTQLLEGLVQELQKKAEHQVGEDGFLLKIKLGHYVHVSSRTRTTAAPWSWLRCIRHILYNEQRLVREATNGNSSAGILVDAMSQKHLQINQTFEELRLVTQDTENELKKLQQTQEYFIIQYQESLRIQAQFAQLAQLNPQERLSRETALQQKQVSLEAWLQREAQTLQQYRVELAEKHQKTLQLLRKQQTIILDDELIQWKRRHDWRGMEAPPRSLDVLQSWCEKLAEIIWQNRQQIRRAEHLCQQLPIPGPVEEMLAEVNATITDIISALVTSTFIIEKQPPQVLKTQTKFAATVRLLVGGKLNVHMNPPQVKATIISEQQAKSLLKNENTRNECSGEILNNCCVMEYHQRTGTLSAHFRNMSLKRIKRADRRGAESVTEEKFTVLFESQFSVGSNELVFQVKTLSLPVVVIVHGSQDHNATATVLWDNAFAEPGRVPFAVPDKVLWPQLCEALNMKFKAEVQSNRGLTKENLLFLAQKLFNNSSSHLEDYNGMSVSWSQFNRENLPGWNYTFWQWFDGVMEVLKKHHKPHWNDGAILGFVNKQQAHDLLINKPDGTFLLRFSDSEIGGITIAWKFDSPDRNLWNLKPFTTREGSIRSLADRLGDLNYLIYVFPDRPKDEVFSKYYTPVLAKAVDGYVKPQIKQVVPEFVSASADSAGSSATYMDQAPSPAVCPQPHYNMYPQNPDPVLDQDGEFDLDETMDVARHVEELLRRPNGQSGPLSPPPAGLFTPARGSLS.

Tyr90 is modified (phosphotyrosine). Ser129 is modified (phosphoserine). The SH2 domain occupies 589–686; sequence WNDGAILGFV…EVFSKYYTPV (98 aa). Tyr682 is modified (phosphotyrosine). A Phosphotyrosine; by JAK2 modification is found at Tyr694. The segment at 765–794 is disordered; sequence EELLRRPNGQSGPLSPPPAGLFTPARGSLS.

This sequence belongs to the transcription factor STAT family. In terms of assembly, forms a homodimer or a heterodimer with a related family member. Binds NR3C1. Interacts with NCOA1 and SOCS7. Interacts with ERBB4. Interacts with EBF4. Interacts with CD69. Post-translationally, ISGylated. In terms of processing, tyrosine phosphorylated in response to KITLG/SCF, IL2, IL3, IL7, IL15, CSF2/GMCSF, GH1, PRL, EPO and THPO. Activated KIT promotes phosphorylation on tyrosine residues and subsequent translocation to the nucleus. Tyrosine phosphorylated in response to constitutively activated FGFR1, FGFR2, FGFR3 and FGFR4. Tyrosine phosphorylation is required for DNA-binding activity and dimerization. Serine phosphorylation is also required for maximal transcriptional activity. Tyrosine phosphorylated in response to signaling via activated FLT3; wild-type FLT3 results in much weaker phosphorylation than constitutively activated mutant FLT3. Alternatively, can be phosphorylated by JAK2 at Tyr-694. Found in mammary gland and, in lesser extent, in ovary, thymus, spleen, kidney, lung, muscle and adrenal gland.

Its subcellular location is the cytoplasm. The protein localises to the nucleus. Functionally, carries out a dual function: signal transduction and activation of transcription. Mediates cellular responses to the cytokine KITLG/SCF and other growth factors. May mediate cellular responses to activated FGFR1, FGFR2, FGFR3 and FGFR4. Binds to the GAS element and activates PRL-induced transcription. Regulates the expression of milk proteins during lactation. This chain is Signal transducer and activator of transcription 5A (STAT5A), found in Ovis aries (Sheep).